A 100-amino-acid chain; its full sequence is Large ribosomal subunit protein uL23 (100 aa).

It belongs to the universal ribosomal protein uL23 family. As to quaternary structure, part of the 50S ribosomal subunit. Contacts protein L29, and trigger factor when it is bound to the ribosome.

Its function is as follows. One of the early assembly proteins it binds 23S rRNA. One of the proteins that surrounds the polypeptide exit tunnel on the outside of the ribosome. Forms the main docking site for trigger factor binding to the ribosome. This chain is Large ribosomal subunit protein uL23, found in Aeromonas hydrophila subsp. hydrophila (strain ATCC 7966 / DSM 30187 / BCRC 13018 / CCUG 14551 / JCM 1027 / KCTC 2358 / NCIMB 9240 / NCTC 8049).